The following is a 58-amino-acid chain: Potassium channel toxin alpha-KTx 16.6 (58 aa).

A signal peptide spans 1-22 (MKILSVLLIALIICSINICSEA). Disulfide bonds link Cys29/Cys50, Cys35/Cys55, and Cys39/Cys57.

It belongs to the short scorpion toxin superfamily. Potassium channel inhibitor family. Alpha-KTx 16 subfamily. As to expression, expressed by the venom gland.

It is found in the secreted. Its function is as follows. Inhibits potassium channel. This Buthus israelis (Israeli scorpion) protein is Potassium channel toxin alpha-KTx 16.6.